The primary structure comprises 234 residues: Large ribosomal subunit protein uL1 (234 aa).

This sequence belongs to the universal ribosomal protein uL1 family. As to quaternary structure, part of the 50S ribosomal subunit.

Its function is as follows. Binds directly to 23S rRNA. The L1 stalk is quite mobile in the ribosome, and is involved in E site tRNA release. Functionally, protein L1 is also a translational repressor protein, it controls the translation of the L11 operon by binding to its mRNA. In Salmonella agona (strain SL483), this protein is Large ribosomal subunit protein uL1.